The following is a 33-amino-acid chain: Protamine-M6/M7 (33 aa).

Residues 1-33 (PRRRRETSRPIRRRRRARRAPIRRRRRVVRRRR) are disordered.

Testis.

It localises to the nucleus. It is found in the chromosome. Protamines substitute for histones in the chromatin of sperm during the haploid phase of spermatogenesis. They compact sperm DNA into a highly condensed, stable and inactive complex. The sequence is that of Protamine-M6/M7 from Mugil cephalus (Flathead mullet).